The primary structure comprises 344 residues: Uroporphyrinogen decarboxylase (344 aa).

Residues 25-29 (RQAGR), Asp-75, Tyr-152, Ser-207, and His-323 each bind substrate.

Belongs to the uroporphyrinogen decarboxylase family. As to quaternary structure, homodimer.

It is found in the cytoplasm. The enzyme catalyses uroporphyrinogen III + 4 H(+) = coproporphyrinogen III + 4 CO2. Its pathway is porphyrin-containing compound metabolism; protoporphyrin-IX biosynthesis; coproporphyrinogen-III from 5-aminolevulinate: step 4/4. In terms of biological role, catalyzes the decarboxylation of four acetate groups of uroporphyrinogen-III to yield coproporphyrinogen-III. The polypeptide is Uroporphyrinogen decarboxylase (Roseobacter denitrificans (strain ATCC 33942 / OCh 114) (Erythrobacter sp. (strain OCh 114))).